The following is a 120-amino-acid chain: NAD(P)H-quinone oxidoreductase subunit 3, chloroplastic (120 aa).

A run of 3 helical transmembrane segments spans residues 10–30 (FWFF…TSKL), 64–84 (MFAL…PWAM), and 89–109 (LGVY…IGLV).

It belongs to the complex I subunit 3 family. In terms of assembly, NDH is composed of at least 16 different subunits, 5 of which are encoded in the nucleus.

It is found in the plastid. The protein resides in the chloroplast thylakoid membrane. The catalysed reaction is a plastoquinone + NADH + (n+1) H(+)(in) = a plastoquinol + NAD(+) + n H(+)(out). It catalyses the reaction a plastoquinone + NADPH + (n+1) H(+)(in) = a plastoquinol + NADP(+) + n H(+)(out). NDH shuttles electrons from NAD(P)H:plastoquinone, via FMN and iron-sulfur (Fe-S) centers, to quinones in the photosynthetic chain and possibly in a chloroplast respiratory chain. The immediate electron acceptor for the enzyme in this species is believed to be plastoquinone. Couples the redox reaction to proton translocation, and thus conserves the redox energy in a proton gradient. The protein is NAD(P)H-quinone oxidoreductase subunit 3, chloroplastic of Chaetosphaeridium globosum (Charophycean green alga).